Here is an 826-residue protein sequence, read N- to C-terminus: Protein lozenge (826 aa).

Disordered stretches follow at residues 1 to 45 (MHLH…ASQT), 87 to 171 (PVSV…WSSS), and 214 to 263 (ASVG…NNNN). The span at 12–24 (PPSPSPNPTPTPS) shows a compositional bias: pro residues. The span at 106–141 (SHHHHHLHHHYSPYHHAHPYHPPHPHAPHHHHHHHP) shows a compositional bias: basic residues. The span at 142-153 (PYPYPPAGPHPP) shows a compositional bias: pro residues. Positions 156 to 171 (VTSSSTSPTGNGWSSS) are enriched in polar residues. One can recognise a Runt domain in the interval 275-403 (LVQKRQQEHP…TVDGPREPRS (129 aa)). Low complexity predominate over residues 774 to 798 (QQQQQQQQQQQQVHHPQQQQVESAG). Positions 774–826 (QQQQQQQQQQQQVHHPQQQQVESAGEVGGSGAGGVESAREEDVGDLSQVWRPY) are disordered.

As to expression, expressed in the pupal eye during programmed cell death.

The protein localises to the nucleus. Involved in prepatterning photoreceptor precursors in the developing eye; in the larval eye disk it defines a subset of cells as an equipotential group that is competent to respond to the sevenless developmental signal and another subset that confer proper photoreceptor identity by positively regulating the homeo box gene Bar. Involved in the aop/pnt dynamic in a Ras-dependent manner to regulate pros expression. Promotes apoptosis in the pupal eye by directly activating aos and klu. Also modulates hid- and rpr-mediated cell death. Regulates amos function in olfactory sensilla development. The chain is Protein lozenge (lz) from Drosophila melanogaster (Fruit fly).